The primary structure comprises 436 residues: MCVVFSPREIVSELDRFIIGQKDAKRSVAIALRNRWRRQQLEGQIREEVMPKNILMIGPTGVGKTEIARRLAKLAGAPFVKVEATKFTEVGYVGRDVEQIIRDLVEIAISLVREKKRDEVQERAHINAEERVLEALVGKTASPATRDNFRQKLRAGELDDKEIEIEVANNSNNSAPTFDIPGMPGAQMGIMNLSDIFGKIGGRTKIRKTTVKDAFKPLIDDESEKLLDQDQIIQEALCITENDGIVFIDEIDKIATQDGGAGAAISREGVQRDLLPLVEGTIVATKYGQIKTDHILFIASGAFHVSKPSDLLPELQGRLPIRVELNALTKEDLRRILTEPEASLIKQYIALMATEDVHLEITDDAIDTLADIAVDLNARIENIGARRLQTVMERVLDEISFTAPDKAGTSFKVDATYVRQSVGELASDVDLSRFIL.

ATP is bound by residues I19, 61–66, D249, E314, and R386; that span reads GVGKTE.

The protein belongs to the ClpX chaperone family. HslU subfamily. In terms of assembly, a double ring-shaped homohexamer of HslV is capped on each side by a ring-shaped HslU homohexamer. The assembly of the HslU/HslV complex is dependent on binding of ATP.

It localises to the cytoplasm. In terms of biological role, ATPase subunit of a proteasome-like degradation complex; this subunit has chaperone activity. The binding of ATP and its subsequent hydrolysis by HslU are essential for unfolding of protein substrates subsequently hydrolyzed by HslV. HslU recognizes the N-terminal part of its protein substrates and unfolds these before they are guided to HslV for hydrolysis. This is ATP-dependent protease ATPase subunit HslU from Bartonella bacilliformis (strain ATCC 35685 / KC583 / Herrer 020/F12,63).